We begin with the raw amino-acid sequence, 92 residues long: Protein S100-A6 (92 aa).

2 consecutive EF-hand domains span residues leucine 12–glutamate 47 and leucine 48–isoleucine 83. The Ca(2+) site is built by threonine 28 and glutamate 33. Lysine 40 carries the post-translational modification N6-acetyllysine. Residues aspartate 61, asparagine 63, aspartate 65, and glutamate 72 each coordinate Ca(2+).

The protein belongs to the S-100 family. In terms of assembly, homodimer; head to tail assembly of 2 subunits. Interacts with CACYBP in a calcium-dependent manner. Interacts with ANXA2 and ANXA11 (via N-terminus). Interacts with SUGT1. Interacts with TP53; has higher affinity for TP53 that is phosphorylated on its N-terminal domain, and lower affinity for TP53 that is phosphorylated on its C-terminal domain. Interacts with tropomyosin. Interacts with FKBP4. Interacts with PPP5C (via TPR repeats); the interaction is calcium-dependent and modulates PPP5C activity. Interacts with TPPP; this interaction inhibits TPPP dimerization.

The protein localises to the nucleus envelope. Its subcellular location is the cytoplasm. It localises to the cell membrane. Its function is as follows. May function as calcium sensor and modulator, contributing to cellular calcium signaling. May function by interacting with other proteins, such as TPR-containing proteins, and indirectly play a role in many physiological processes such as the reorganization of the actin cytoskeleton and in cell motility. Binds 2 calcium ions. Calcium binding is cooperative. The polypeptide is Protein S100-A6 (S100A6) (Equus caballus (Horse)).